We begin with the raw amino-acid sequence, 1403 residues long: Centrosomal protein of 162 kDa (1403 aa).

The disordered stretch occupies residues 19 to 44 (ELSDDSFENSNETPSQPNKDRKKKDT). Residues 26 to 35 (ENSNETPSQP) are compositionally biased toward polar residues. Phosphoserine is present on residues Ser156 and Ser159. 3 disordered regions span residues 171-235 (NVEP…EKTG), 305-342 (DTGE…TTES), and 449-586 (NPSL…SDDS). Over residues 176 to 189 (EGGRENESEHKELP) the composition is skewed to basic and acidic residues. A compositionally biased stretch (acidic residues) spans 192 to 204 (YSDDFEDAEDTDE). The segment covering 206-220 (LITKDEETRPKENPE) has biased composition (basic and acidic residues). Residues 449–466 (NPSLLPQDNKANQTSRSR) are compositionally biased toward polar residues. The residue at position 468 (Ser468) is a Phosphoserine. Residues 481-496 (PCKKARSAPPLPRRKP) show a composition bias toward basic residues. Polar residues predominate over residues 504–517 (ARSSGYSKPSSPLQ). 2 stretches are compositionally biased toward basic and acidic residues: residues 522-532 (LEKKTSKDNTK) and 567-581 (PHRE…RPED). Coiled coils occupy residues 610 to 1120 (KRAQ…MLSR), 1170 to 1205 (EVLE…QLES), and 1234 to 1385 (CQNA…LHRQ).

Belongs to the CEP162 family. As to quaternary structure, interacts with alpha-tubulin. Interacts with CPNE4. Interacts with CEP290.

The protein resides in the cytoplasm. It is found in the cytoskeleton. It localises to the microtubule organizing center. The protein localises to the centrosome. Its subcellular location is the centriole. The protein resides in the spindle. It is found in the nucleus. In terms of biological role, required to promote assembly of the transition zone in primary cilia. Acts by specifically recognizing and binding the axonemal microtubule. Localizes to the distal ends of centrioles before ciliogenesis and directly binds to axonemal microtubule, thereby promoting and restricting transition zone formation specifically at the cilia base. Required to mediate CEP290 association with microtubules. This Rattus norvegicus (Rat) protein is Centrosomal protein of 162 kDa (Cep162).